The chain runs to 594 residues: Glutamate decarboxylase 1 (594 aa).

Low complexity predominate over residues 1–13; sequence MASSTPSSSATSS. A disordered region spans residues 1–25; it reads MASSTPSSSATSSNAGPDPNTTNLR. Ser78 carries the phosphoserine modification. 190-192 is a binding site for 4-aminobutanoate; it reads QLS. The residue at position 405 (Lys405) is an N6-(pyridoxal phosphate)lysine. Residue Arg567 participates in 4-aminobutanoate binding.

Belongs to the group II decarboxylase family. As to quaternary structure, homodimer. It depends on pyridoxal 5'-phosphate as a cofactor.

The enzyme catalyses L-glutamate + H(+) = 4-aminobutanoate + CO2. Functionally, catalyzes the synthesis of the inhibitory neurotransmitter gamma-aminobutyric acid (GABA) with pyridoxal 5'-phosphate as cofactor. The protein is Glutamate decarboxylase 1 (GAD1) of Sus scrofa (Pig).